A 419-amino-acid chain; its full sequence is Carboxypeptidase A1 (419 aa).

A signal peptide spans Met1–Ala16. The propeptide at Lys17–Arg110 is activation peptide. Residues Thr121 to Thr414 form the Peptidase M14 domain. Residues His179 and Glu182 each contribute to the Zn(2+) site. Substrate is bound by residues His179–Glu182, Arg237, and Asn254–Arg255. Cys248 and Cys271 are joined by a disulfide. His306 lines the Zn(2+) pocket. Substrate is bound by residues Ser307 to Tyr308 and Tyr358. The active-site Proton donor/acceptor is the Glu380.

This sequence belongs to the peptidase M14 family. In terms of assembly, monomer. May form a complex with proelastase 2. Requires Zn(2+) as cofactor.

The protein resides in the secreted. The catalysed reaction is Release of a C-terminal amino acid, but little or no action with -Asp, -Glu, -Arg, -Lys or -Pro.. The enzyme catalyses leukotriene C4 + H2O = leukotriene F4 + glycine. Carboxypeptidase that catalyzes the release of a C-terminal amino acid, but has little or no action with -Asp, -Glu, -Arg, -Lys or -Pro. Catalyzes the conversion of leukotriene C4 to leukotriene F4 via the hydrolysis of an amide bond. The chain is Carboxypeptidase A1 (CPA1) from Sus scrofa (Pig).